Consider the following 464-residue polypeptide: Mitogen-activated protein kinase 10 (464 aa).

In terms of domain architecture, Protein kinase spans 64-359 (YQNLKPIGSG…VDDALQHPYI (296 aa)). Residues 70–78 (IGSGAQGIV) and lysine 93 contribute to the ATP site. Aspartate 189 (proton acceptor) is an active-site residue. Threonine 221 is modified (phosphothreonine; by MAP2K7). The TXY motif lies at 221 to 223 (TPY). Tyrosine 223 is subject to Phosphotyrosine; by MAP2K4. Residues 405-464 (TKNGVVKGQPSPSGAAVNSSESLPPSSSVNDISSMSTDQTLASDTDSSLEASAGPLGCCR) are disordered. Low complexity predominate over residues 423–432 (SSESLPPSSS). Over residues 433-454 (VNDISSMSTDQTLASDTDSSLE) the composition is skewed to polar residues. S-palmitoyl cysteine attachment occurs at residues cysteine 462 and cysteine 463.

The protein belongs to the protein kinase superfamily. CMGC Ser/Thr protein kinase family. MAP kinase subfamily. In terms of assembly, interacts with MAPK8IP1/JIP-1 and MAPK8IP3/JIP-3/JSAP1. Interacts with SPAG9/MAPK8IP4/JIP4. Interacts with HDAC9 and MAPKBP1. Interacts with ARRB2; the interaction enhances MAPK10 activation by MAP3K5. Interacts with SARM1. Interacts with JUND; interaction is inhibited in the presence of MEN1. It depends on Mg(2+) as a cofactor. Post-translationally, dually phosphorylated on Thr-221 and Tyr-223 by MAP2K4 and MAP2K7, which activates the enzyme. MAP2K7 shows a strong preference for Thr-221 while MAP2K4 phosphorylates Tyr-223 preferentially. Weakly autophosphorylated on threonine and tyrosine residues in vitro. In terms of processing, palmitoylation regulates subcellular location and axonal development.

The protein localises to the cytoplasm. It localises to the membrane. The protein resides in the nucleus. Its subcellular location is the mitochondrion. The enzyme catalyses L-seryl-[protein] + ATP = O-phospho-L-seryl-[protein] + ADP + H(+). It carries out the reaction L-threonyl-[protein] + ATP = O-phospho-L-threonyl-[protein] + ADP + H(+). With respect to regulation, activated by threonine and tyrosine phosphorylation by two dual specificity kinases, MAP2K4 and MAP2K7. MAP2K7 phosphorylates MAPK10 on Thr-221 causing a conformational change and a large increase in Vmax for the enzyme. MAP2K4 then phosphorylates Tyr-223 resulting in a further increase in Vmax. Inhibited by dual specificity phosphatases, such as DUSP1. Inhibited by HDAC9. Serine/threonine-protein kinase involved in various processes such as neuronal proliferation, differentiation, migration and programmed cell death. Extracellular stimuli such as pro-inflammatory cytokines or physical stress stimulate the stress-activated protein kinase/c-Jun N-terminal kinase (SAP/JNK) signaling pathway. In this cascade, two dual specificity kinases MAP2K4/MKK4 and MAP2K7/MKK7 phosphorylate and activate MAPK10/JNK3. In turn, MAPK10/JNK3 phosphorylates a number of transcription factors, primarily components of AP-1 such as JUN and ATF2 and thus regulates AP-1 transcriptional activity. Plays regulatory roles in the signaling pathways during neuronal apoptosis. Phosphorylates the neuronal microtubule regulator STMN2. Acts in the regulation of the amyloid-beta precursor protein/APP signaling during neuronal differentiation by phosphorylating APP. Also participates in neurite growth in spiral ganglion neurons. Phosphorylates the CLOCK-BMAL1 heterodimer and plays a role in the photic regulation of the circadian clock. Phosphorylates JUND and this phosphorylation is inhibited in the presence of MEN1. This is Mitogen-activated protein kinase 10 (Mapk10) from Rattus norvegicus (Rat).